The following is a 218-amino-acid chain: MKKYKAQFIEFMLDRKILTFGEFILKSGRVSPYFFNAGLFNKGSDLIKLGRFYADALIDSGIECDLLFGPAYKGIPITITTAMALYANHHLDLTYCFNRKEIKDHGEGGGLVGGALQGKVLLVDDVITAGTAIRESVEIIHAHSASLAGILVALDRQERGNGTLSAIEEIEQKYQSKVISIVTLEDMIHFLKNEKTMIEAFSALNKYAEQYGVLRKNL.

Lys26 is a 5-phospho-alpha-D-ribose 1-diphosphate binding site. Orotate is bound at residue 34 to 35; the sequence is FF. Residues 72-73, Arg99, Lys100, Lys103, His105, and 124-132 each bind 5-phospho-alpha-D-ribose 1-diphosphate; these read YK and DDVITAGTA. Residues Thr128 and Arg156 each coordinate orotate.

The protein belongs to the purine/pyrimidine phosphoribosyltransferase family. PyrE subfamily. In terms of assembly, homodimer. Mg(2+) serves as cofactor.

The catalysed reaction is orotidine 5'-phosphate + diphosphate = orotate + 5-phospho-alpha-D-ribose 1-diphosphate. It participates in pyrimidine metabolism; UMP biosynthesis via de novo pathway; UMP from orotate: step 1/2. Catalyzes the transfer of a ribosyl phosphate group from 5-phosphoribose 1-diphosphate to orotate, leading to the formation of orotidine monophosphate (OMP). This chain is Orotate phosphoribosyltransferase, found in Hamiltonella defensa subsp. Acyrthosiphon pisum (strain 5AT).